The chain runs to 229 residues: Methyltransferase ctvB (229 aa).

Belongs to the methyltransferase superfamily.

The protein operates within mycotoxin biosynthesis. Methyltransferase; part of the gene cluster that mediates the biosynthesis of citreoviridin, an inhibitor of the of F1-ATPase beta-subunit. The HR-PKS ctvA accepts acetyl-CoA as the starter unit and catalyzes eight iterations of malonyl-CoA extension and four iterations of SAM-dependent methylation at C4, C12, C14, and C16. The KR and DH domains selectively act on the first six iterations to generate the hexaene chain. In the last three iterations, the KR and DH domains terminate their functions to yield a beta,delta-diketo ester moiety, which then undergoes intramolecular cyclization to yield an alpha-pyrone intermediate. Subsequently, ctvB methylates the alpha-pyrone hydroxyl group to generate citreomontanin. In order to form the tetrahydrofuran ring with the correct stereochemistry, the terminal alkenes of citreomontanin need to undergo isomerization to yield a (17Z)-hexaene, a step that could be catalyzed by ctvC. The (17Z)-hexaene then undergoes bisepoxidation by ctvC to form a (17R,16R,15S,14R)-bisepoxide moiety. Lastly, ctvD acts as a regioselective hydrolase to form the tetrahydrofuran ring with the substituents in the correct absolute configuration, completing the biosynthesis of citreoviridin. The sequence is that of Methyltransferase ctvB from Aspergillus terreus (strain NIH 2624 / FGSC A1156).